Consider the following 330-residue polypeptide: Probable WRKY transcription factor 39 (330 aa).

Residues 256–322 (KIADIPPDEY…YEGEHNHSRI (67 aa)) constitute a DNA-binding region (WRKY).

The protein resides in the nucleus. Its function is as follows. Transcription factor. Interacts specifically with the W box (5'-(T)TGAC[CT]-3'), a frequently occurring elicitor-responsive cis-acting element. In Arabidopsis thaliana (Mouse-ear cress), this protein is Probable WRKY transcription factor 39 (WRKY39).